Consider the following 119-residue polypeptide: Endocuticle structural glycoprotein SgAbd-3 (119 aa).

Residue Gln1 is modified to Pyrrolidone carboxylic acid. In terms of domain architecture, Chitin-binding type R&amp;R spans 24–98 (DGSYRYSFET…PQGAHLPTPP (75 aa)). Residues 33-55 (TSDGQRASQEGALKQVSAPGPDG) form a disordered region. Thr96 is a glycosylation site (O-linked (HexNAc...) threonine).

Functionally, component of the abdominal endocuticle. This chain is Endocuticle structural glycoprotein SgAbd-3, found in Schistocerca gregaria (Desert locust).